A 166-amino-acid chain; its full sequence is Interferon gamma (166 aa).

An N-terminal signal peptide occupies residues 1-23 (MNYTTICLAFQLCVIFCSSGYYC). At Gln24 the chain carries Pyrrolidone carboxylic acid. Residues Asn39, Asn106, and Asn107 are each glycosylated (N-linked (GlcNAc...) asparagine).

The protein belongs to the type II (or gamma) interferon family. In terms of assembly, homodimer. Interacts with IFNGR1 (via extracellular domain); this interaction promotes IFNGR1 dimerization.

It is found in the secreted. In terms of biological role, type II interferon produced by immune cells such as T-cells and NK cells that plays crucial roles in antimicrobial, antiviral, and antitumor responses by activating effector immune cells and enhancing antigen presentation. Primarily signals through the JAK-STAT pathway after interaction with its receptor IFNGR1 to affect gene regulation. Upon IFNG binding, IFNGR1 intracellular domain opens out to allow association of downstream signaling components JAK2, JAK1 and STAT1, leading to STAT1 activation, nuclear translocation and transcription of IFNG-regulated genes. Many of the induced genes are transcription factors such as IRF1 that are able to further drive regulation of a next wave of transcription. Plays a role in class I antigen presentation pathway by inducing a replacement of catalytic proteasome subunits with immunoproteasome subunits. In turn, increases the quantity, quality, and repertoire of peptides for class I MHC loading. Increases the efficiency of peptide generation also by inducing the expression of activator PA28 that associates with the proteasome and alters its proteolytic cleavage preference. Up-regulates as well MHC II complexes on the cell surface by promoting expression of several key molecules such as cathepsins B/CTSB, H/CTSH, and L/CTSL. Participates in the regulation of hematopoietic stem cells during development and under homeostatic conditions by affecting their development, quiescence, and differentiation. This is Interferon gamma (IFNG) from Mustela putorius furo (European domestic ferret).